The primary structure comprises 160 residues: Phosphatidylinositol N-acetylglucosaminyltransferase subunit gpi15 (160 aa).

Transmembrane regions (helical) follow at residues 22–42 and 48–68; these read GTQM…SLAI and IIIT…ISGV.

It belongs to the PIGH family.

Its subcellular location is the endoplasmic reticulum membrane. The catalysed reaction is a 1,2-diacyl-sn-glycero-3-phospho-(1D-myo-inositol) + UDP-N-acetyl-alpha-D-glucosamine = a 6-(N-acetyl-alpha-D-glucosaminyl)-1-(1,2-diacyl-sn-glycero-3-phospho)-1D-myo-inositol + UDP + H(+). It functions in the pathway glycolipid biosynthesis; glycosylphosphatidylinositol-anchor biosynthesis. Its function is as follows. Part of the complex catalyzing the transfer of N-acetylglucosamine from UDP-N-acetylglucosamine to phosphatidylinositol, the first step of GPI biosynthesis. The protein is Phosphatidylinositol N-acetylglucosaminyltransferase subunit gpi15 (gpi15) of Schizosaccharomyces pombe (strain 972 / ATCC 24843) (Fission yeast).